A 57-amino-acid polypeptide reads, in one-letter code: Large ribosomal subunit protein bL32 (57 aa).

Belongs to the bacterial ribosomal protein bL32 family.

The sequence is that of Large ribosomal subunit protein bL32 from Bacillus anthracis (strain A0248).